Reading from the N-terminus, the 416-residue chain is Antigen EG13 (416 aa).

In terms of domain architecture, F-BAR spans 1-247; the sequence is MIQERADIEK…TVAKVDADAD (247 aa). The disordered stretch occupies residues 297–327; the sequence is LKTFTSPDRGGPIPGTTDSGSNISTSPVHTT. Residues 312–327 show a composition bias toward polar residues; it reads TTDSGSNISTSPVHTT. The region spanning 361-416 is the SH3 domain; it reads RPGVPIRALYDYVGVEADELSFNSGDLFEKLEDEDEQGWCKGRKDGRVGLYPRQLR.

The polypeptide is Antigen EG13 (EG13) (Echinococcus granulosus (Hydatid tapeworm)).